The primary structure comprises 342 residues: Protein RecA 1 (342 aa).

68–75 (GNESSGKT) is an ATP binding site.

Belongs to the RecA family.

Its subcellular location is the cytoplasm. Its function is as follows. Can catalyze the hydrolysis of ATP in the presence of single-stranded DNA, the ATP-dependent uptake of single-stranded DNA by duplex DNA, and the ATP-dependent hybridization of homologous single-stranded DNAs. It interacts with LexA causing its activation and leading to its autocatalytic cleavage. The sequence is that of Protein RecA 1 from Myxococcus xanthus.